A 529-amino-acid chain; its full sequence is Cytochrome P450 monooxygenase 45 (529 aa).

A helical transmembrane segment spans residues 24-44 (VLTICILALLTFVLREIVLYF). Asn-185 and Asn-322 each carry an N-linked (GlcNAc...) asparagine glycan. Cys-454 contacts heme.

It belongs to the cytochrome P450 family. Heme serves as cofactor.

The protein localises to the membrane. It functions in the pathway secondary metabolite biosynthesis. Functionally, cytochrome P450 monooxygenase that is able to use trans-stilbene as a substrate for oxidation. The sequence is that of Cytochrome P450 monooxygenase 45 from Postia placenta (strain ATCC 44394 / Madison 698-R) (Brown rot fungus).